The following is a 464-amino-acid chain: tRNA-2-methylthio-N(6)-dimethylallyladenosine synthase (464 aa).

An MTTase N-terminal domain is found at 19–135 (GSYWITTFGC…LENLLGKVDL (117 aa)). 6 residues coordinate [4Fe-4S] cluster: C28, C64, C98, C170, C174, and C177. A Radical SAM core domain is found at 156–394 (RESSICGWVN…DLVEKTARSR (239 aa)). In terms of domain architecture, TRAM spans 396–464 (KRYINNIESV…PFSLTGELYL (69 aa)).

The protein belongs to the methylthiotransferase family. MiaB subfamily. Monomer. Requires [4Fe-4S] cluster as cofactor.

Its subcellular location is the cytoplasm. The enzyme catalyses N(6)-dimethylallyladenosine(37) in tRNA + (sulfur carrier)-SH + AH2 + 2 S-adenosyl-L-methionine = 2-methylsulfanyl-N(6)-dimethylallyladenosine(37) in tRNA + (sulfur carrier)-H + 5'-deoxyadenosine + L-methionine + A + S-adenosyl-L-homocysteine + 2 H(+). Its function is as follows. Catalyzes the methylthiolation of N6-(dimethylallyl)adenosine (i(6)A), leading to the formation of 2-methylthio-N6-(dimethylallyl)adenosine (ms(2)i(6)A) at position 37 in tRNAs that read codons beginning with uridine. The polypeptide is tRNA-2-methylthio-N(6)-dimethylallyladenosine synthase (Prochlorococcus marinus (strain AS9601)).